Consider the following 98-residue polypeptide: Cell division protein FtsB (98 aa).

Residues 1–3 (MKR) are Cytoplasmic-facing. The chain crosses the membrane as a helical span at residues 4 to 21 (LLIVLIALLAMLEYRLWF). Over 22–98 (GDKSLAESFH…GGERDKPSND (77 aa)) the chain is Periplasmic. Residues 31–74 (HLQEQIKLQQQSNAQLVARNQILREEISDLRSGTEALEERARNE) are a coiled coil.

This sequence belongs to the FtsB family. Part of a complex composed of FtsB, FtsL and FtsQ.

The protein resides in the cell inner membrane. Essential cell division protein. May link together the upstream cell division proteins, which are predominantly cytoplasmic, with the downstream cell division proteins, which are predominantly periplasmic. This chain is Cell division protein FtsB, found in Shewanella halifaxensis (strain HAW-EB4).